Here is a 677-residue protein sequence, read N- to C-terminus: Gamma-tubulin complex subunit mod21 (677 aa).

Component of the gamma-tubulin complex composed of at least alp4, alp6, alp16, ghf1, gtb1 and mod21.

The protein resides in the cytoplasm. It is found in the cytoskeleton. It localises to the microtubule organizing center. Its subcellular location is the spindle pole body. In terms of biological role, component of the gamma-tubulin complex that is required for the regulation of both interphase microtubule organization and nucleation, and mitotic bipolar spindles. Required for correct septation. The sequence is that of Gamma-tubulin complex subunit mod21 from Schizosaccharomyces pombe (strain 972 / ATCC 24843) (Fission yeast).